The chain runs to 279 residues: Eukaryotic translation initiation factor 3 subunit G (279 aa).

Disordered regions lie at residues 69–90 (AKYG…QLGE) and 149–193 (LNGG…EARD). S77 carries the phosphoserine modification. The RRM domain maps to 196–275 (TTLKVSQLNT…LILHLEWSKK (80 aa)).

It belongs to the eIF-3 subunit G family. As to quaternary structure, component of the eukaryotic translation initiation factor 3 (eIF-3) complex.

It is found in the cytoplasm. In terms of biological role, RNA-binding component of the eukaryotic translation initiation factor 3 (eIF-3) complex, which is involved in protein synthesis of a specialized repertoire of mRNAs and, together with other initiation factors, stimulates binding of mRNA and methionyl-tRNAi to the 40S ribosome. The eIF-3 complex specifically targets and initiates translation of a subset of mRNAs involved in cell proliferation. This subunit can bind 18S rRNA. The sequence is that of Eukaryotic translation initiation factor 3 subunit G from Lodderomyces elongisporus (strain ATCC 11503 / CBS 2605 / JCM 1781 / NBRC 1676 / NRRL YB-4239) (Yeast).